Reading from the N-terminus, the 433-residue chain is Citrate synthase, mitochondrial (433 aa).

Catalysis depends on residues His-274 and His-320. Oxaloacetate is bound at residue Arg-329. Asp-375 is an active-site residue. Oxaloacetate contacts are provided by Arg-401 and Arg-421.

It belongs to the citrate synthase family. As to quaternary structure, homodimer.

The protein resides in the mitochondrion matrix. The catalysed reaction is oxaloacetate + acetyl-CoA + H2O = citrate + CoA + H(+). It functions in the pathway carbohydrate metabolism; tricarboxylic acid cycle; isocitrate from oxaloacetate: step 1/2. Key enzyme of the Krebs tricarboxylic acid cycle which catalyzes the synthesis of citrate from acetyl coenzyme A and oxaloacetate. This is Citrate synthase, mitochondrial (CS) from Gallus gallus (Chicken).